The sequence spans 2280 residues: Acetyl-CoA carboxylase (2280 aa).

Residues Val-68–Ala-577 enclose the Biotin carboxylation domain. Positions Glu-226–Met-418 constitute an ATP-grasp domain. Residue Gly-266 to Gly-271 participates in ATP binding. Positions 375, 389, and 391 each coordinate Mn(2+). Arg-393 is an active-site residue. Positions Leu-704–Thr-778 constitute a Biotinyl-binding domain. Residue Lys-745 is modified to N6-biotinyllysine. Residues Ser-1179 and Ser-1181 each carry the phosphoserine modification. The 340-residue stretch at Pro-1524–Pro-1863 folds into the CoA carboxyltransferase N-terminal domain. The interval Pro-1524–Gln-2181 is carboxyltransferase. CoA-binding residues include Arg-1772, Lys-2074, and Arg-2076. Residues Thr-1867–Gln-2181 enclose the CoA carboxyltransferase C-terminal domain.

In terms of assembly, interacts with sad1. It depends on biotin as a cofactor. The cofactor is Mn(2+).

Its subcellular location is the cytoplasm. The enzyme catalyses hydrogencarbonate + acetyl-CoA + ATP = malonyl-CoA + ADP + phosphate + H(+). It catalyses the reaction N(6)-biotinyl-L-lysyl-[protein] + hydrogencarbonate + ATP = N(6)-carboxybiotinyl-L-lysyl-[protein] + ADP + phosphate + H(+). It functions in the pathway lipid metabolism; malonyl-CoA biosynthesis; malonyl-CoA from acetyl-CoA: step 1/1. By phosphorylation. In terms of biological role, carries out three functions: biotin carboxyl carrier protein, biotin carboxylase and carboxyltransferase. The protein is Acetyl-CoA carboxylase (cut6) of Schizosaccharomyces pombe (strain 972 / ATCC 24843) (Fission yeast).